The chain runs to 140 residues: Alpha-lactalbumin (140 aa).

An N-terminal signal peptide occupies residues M1–A19. One can recognise a C-type lysozyme domain in the interval I20–C140. Disulfide bonds link C25-C140, C47-C131, C80-C96, and C92-C110. N63 carries an N-linked (GlcNAc...) asparagine glycan. Positions 98, 101, 103, 106, and 107 each coordinate Ca(2+).

Belongs to the glycosyl hydrolase 22 family. Lactose synthase (LS) is a heterodimer of a catalytic component, beta1,4-galactosyltransferase (beta4Gal-T1) and a regulatory component, alpha-lactalbumin (LA). In terms of tissue distribution, mammary gland specific. Secreted in milk.

It is found in the secreted. Its function is as follows. Regulatory subunit of lactose synthase, changes the substrate specificity of galactosyltransferase in the mammary gland making glucose a good acceptor substrate for this enzyme. This enables LS to synthesize lactose, the major carbohydrate component of milk. In other tissues, galactosyltransferase transfers galactose onto the N-acetylglucosamine of the oligosaccharide chains in glycoproteins. The chain is Alpha-lactalbumin (LALBA) from Notamacropus eugenii (Tammar wallaby).